The primary structure comprises 123 residues: NADH-quinone oxidoreductase subunit A (123 aa).

3 helical membrane passes run phenylalanine 11–glycine 31, leucine 67–valine 87, and isoleucine 92–alanine 112.

The protein belongs to the complex I subunit 3 family. NDH-1 is composed of 14 different subunits. Subunits NuoA, H, J, K, L, M, N constitute the membrane sector of the complex.

The protein resides in the cell inner membrane. The enzyme catalyses a quinone + NADH + 5 H(+)(in) = a quinol + NAD(+) + 4 H(+)(out). Its function is as follows. NDH-1 shuttles electrons from NADH, via FMN and iron-sulfur (Fe-S) centers, to quinones in the respiratory chain. The immediate electron acceptor for the enzyme in this species is believed to be ubiquinone. Couples the redox reaction to proton translocation (for every two electrons transferred, four hydrogen ions are translocated across the cytoplasmic membrane), and thus conserves the redox energy in a proton gradient. The protein is NADH-quinone oxidoreductase subunit A of Paraburkholderia phymatum (strain DSM 17167 / CIP 108236 / LMG 21445 / STM815) (Burkholderia phymatum).